We begin with the raw amino-acid sequence, 172 residues long: Translation initiation factor IF-3 (172 aa).

This sequence belongs to the IF-3 family. As to quaternary structure, monomer.

It localises to the cytoplasm. Its function is as follows. IF-3 binds to the 30S ribosomal subunit and shifts the equilibrium between 70S ribosomes and their 50S and 30S subunits in favor of the free subunits, thus enhancing the availability of 30S subunits on which protein synthesis initiation begins. This chain is Translation initiation factor IF-3, found in Oceanobacillus iheyensis (strain DSM 14371 / CIP 107618 / JCM 11309 / KCTC 3954 / HTE831).